The following is a 286-amino-acid chain: Nucleotide-binding protein APL_0334 (286 aa).

8–15 serves as a coordination point for ATP; the sequence is GRSGSGKS. GTP is bound at residue 56 to 59; that stretch reads DIRN.

Belongs to the RapZ-like family.

Its function is as follows. Displays ATPase and GTPase activities. The protein is Nucleotide-binding protein APL_0334 of Actinobacillus pleuropneumoniae serotype 5b (strain L20).